Reading from the N-terminus, the 259-residue chain is 5'-nucleotidase SurE (259 aa).

Positions 8, 9, 39, and 98 each coordinate a divalent metal cation.

Belongs to the SurE nucleotidase family. A divalent metal cation serves as cofactor.

It localises to the cytoplasm. The catalysed reaction is a ribonucleoside 5'-phosphate + H2O = a ribonucleoside + phosphate. Functionally, nucleotidase that shows phosphatase activity on nucleoside 5'-monophosphates. The sequence is that of 5'-nucleotidase SurE from Fervidobacterium nodosum (strain ATCC 35602 / DSM 5306 / Rt17-B1).